Consider the following 966-residue polypeptide: DNA mismatch repair protein MutS (966 aa).

An ATP-binding site is contributed by 709-716; the sequence is GPNMAGKS. A disordered region spans residues 894-914; sequence EGQRPPSSPAQPPAPPAPVVV. The span at 899-912 shows a compositional bias: pro residues; that stretch reads PSSPAQPPAPPAPV.

Belongs to the DNA mismatch repair MutS family.

In terms of biological role, this protein is involved in the repair of mismatches in DNA. It is possible that it carries out the mismatch recognition step. This protein has a weak ATPase activity. In Chloroflexus aurantiacus (strain ATCC 29366 / DSM 635 / J-10-fl), this protein is DNA mismatch repair protein MutS.